The sequence spans 152 residues: Large-conductance mechanosensitive channel (152 aa).

Transmembrane regions (helical) follow at residues 14–34 (VIDL…VTSL) and 81–101 (GLFL…FIAI).

The protein belongs to the MscL family. In terms of assembly, homopentamer.

It is found in the cell membrane. In terms of biological role, channel that opens in response to stretch forces in the membrane lipid bilayer. May participate in the regulation of osmotic pressure changes within the cell. The polypeptide is Large-conductance mechanosensitive channel (Clostridium perfringens (strain 13 / Type A)).